The chain runs to 225 residues: Rho GDP-dissociation inhibitor 3 (225 aa).

It belongs to the Rho GDI family. Detected only in brain, lung, kidney and testis.

The protein localises to the cytoplasm. Functionally, inhibits GDP/GTP exchange reaction of RhoB. Interacts specifically with the GDP- and GTP-bound forms of post-translationally processed Rhob and Rhog proteins, both of which show a growth-regulated expression in mammalian cells. Stimulates the release of the GDP-bound but not the GTP-bound RhoB protein. Also inhibits the GDP/GTP exchange of RhoB but shows less ability to inhibit the dissociation of prebound GTP. The chain is Rho GDP-dissociation inhibitor 3 (Arhgdig) from Mus musculus (Mouse).